Here is a 468-residue protein sequence, read N- to C-terminus: 6-phosphogluconate dehydrogenase, decarboxylating (468 aa).

NADP(+) contacts are provided by residues 10-15, 33-35, 74-76, and Asn-102; these read GMAVMG, NRS, and VKA. Substrate contacts are provided by residues Asn-102 and 128–130; that span reads SGG. The active-site Proton acceptor is the Lys-183. 186-187 is a binding site for substrate; sequence HN. Catalysis depends on Glu-190, which acts as the Proton donor. Tyr-191, Lys-260, Arg-287, Arg-445, and His-451 together coordinate substrate.

It belongs to the 6-phosphogluconate dehydrogenase family. As to quaternary structure, homodimer.

The catalysed reaction is 6-phospho-D-gluconate + NADP(+) = D-ribulose 5-phosphate + CO2 + NADPH. The protein operates within carbohydrate degradation; pentose phosphate pathway; D-ribulose 5-phosphate from D-glucose 6-phosphate (oxidative stage): step 3/3. In terms of biological role, catalyzes the oxidative decarboxylation of 6-phosphogluconate to ribulose 5-phosphate and CO(2), with concomitant reduction of NADP to NADPH. In Escherichia coli, this protein is 6-phosphogluconate dehydrogenase, decarboxylating (gnd).